We begin with the raw amino-acid sequence, 210 residues long: HTH-type transcriptional repressor FabR (210 aa).

In terms of domain architecture, HTH tetR-type spans 10-70 (KTRRSLVEAA…TMVDESGLML (61 aa)). A DNA-binding region (H-T-H motif) is located at residues 33 to 52 (SLREVAREAGIAPTSFYRHF).

As to quaternary structure, homodimer.

It is found in the cytoplasm. Functionally, represses the transcription of fabB, involved in unsaturated fatty acid (UFA) biosynthesis. By controlling UFA production, FabR directly influences the physical properties of the membrane bilayer. In Citrobacter koseri (strain ATCC BAA-895 / CDC 4225-83 / SGSC4696), this protein is HTH-type transcriptional repressor FabR.